The following is a 689-amino-acid chain: Probable E3 ubiquitin ligase complex SCF subunit sconB (689 aa).

Basic and acidic residues-rich tracts occupy residues 1–12 (MDAHELSFRDGH) and 19–29 (MKDECASEEKA). A disordered region spans residues 1-66 (MDAHELSFRD…STQDKPHSFN (66 aa)). In terms of domain architecture, F-box spans 186–232 (IDFLTALPPEISFKILCYLDTTSLCKAAQVSRRWRALADDDVVWHRM). Positions 267-306 (AATWDVSEQPAETESNSATIDTAASGSKRKPESDKEDTAM) are disordered. Positions 276-291 (PAETESNSATIDTAAS) are enriched in polar residues. The span at 295–306 (RKPESDKEDTAM) shows a compositional bias: basic and acidic residues. WD repeat units lie at residues 358 to 395 (GHSN…ELRT), 398 to 437 (GHRS…STYS), 439 to 475 (HRGG…TCLL), 477 to 518 (GHTD…RTFH), 572 to 615 (DTPS…CLRT), 616 to 655 (FFGH…CERT), and 658 to 689 (GHSG…SFQT).

The protein belongs to the WD repeat MET30/SCONB/SCON-2 family. Component of the SCF(sconB) E3 ubiquitin ligase complex.

It participates in protein modification; protein ubiquitination. In terms of biological role, component of the SCF(sconB) E3 ubiquitin ligase complex involved in the regulation of sulfur metabolite repression, probably by mediating the inactivation or degradation of the metR transcription factor. The protein is Probable E3 ubiquitin ligase complex SCF subunit sconB (sconB) of Neosartorya fischeri (strain ATCC 1020 / DSM 3700 / CBS 544.65 / FGSC A1164 / JCM 1740 / NRRL 181 / WB 181) (Aspergillus fischerianus).